The following is a 351-amino-acid chain: Holliday junction branch migration complex subunit RuvB (351 aa).

The segment covering 1–12 has biased composition (acidic residues); the sequence is MGRFEDDAEVED. The interval 1–23 is disordered; sequence MGRFEDDAEVEDREVSPALTVGE. Residues 1-191 form a large ATPase domain (RuvB-L) region; the sequence is MGRFEDDAEV…FGFTAHMDFY (191 aa). Residues leucine 30, arginine 31, glycine 72, lysine 75, threonine 76, serine 77, 138 to 140, arginine 181, tyrosine 191, and arginine 228 each bind ATP; that span reads EDF. Mg(2+) is bound at residue threonine 76. Residues 192 to 262 form a small ATPAse domain (RuvB-S) region; it reads EPVELERVLA…IAKSALEVYD (71 aa). The tract at residues 265-351 is head domain (RuvB-H); the sequence is ELGLDRLDRA…TGIGQAGLFD (87 aa). DNA is bound by residues arginine 320 and arginine 325.

It belongs to the RuvB family. Homohexamer. Forms an RuvA(8)-RuvB(12)-Holliday junction (HJ) complex. HJ DNA is sandwiched between 2 RuvA tetramers; dsDNA enters through RuvA and exits via RuvB. An RuvB hexamer assembles on each DNA strand where it exits the tetramer. Each RuvB hexamer is contacted by two RuvA subunits (via domain III) on 2 adjacent RuvB subunits; this complex drives branch migration. In the full resolvosome a probable DNA-RuvA(4)-RuvB(12)-RuvC(2) complex forms which resolves the HJ.

The protein localises to the cytoplasm. The catalysed reaction is ATP + H2O = ADP + phosphate + H(+). The RuvA-RuvB-RuvC complex processes Holliday junction (HJ) DNA during genetic recombination and DNA repair, while the RuvA-RuvB complex plays an important role in the rescue of blocked DNA replication forks via replication fork reversal (RFR). RuvA specifically binds to HJ cruciform DNA, conferring on it an open structure. The RuvB hexamer acts as an ATP-dependent pump, pulling dsDNA into and through the RuvAB complex. RuvB forms 2 homohexamers on either side of HJ DNA bound by 1 or 2 RuvA tetramers; 4 subunits per hexamer contact DNA at a time. Coordinated motions by a converter formed by DNA-disengaged RuvB subunits stimulates ATP hydrolysis and nucleotide exchange. Immobilization of the converter enables RuvB to convert the ATP-contained energy into a lever motion, pulling 2 nucleotides of DNA out of the RuvA tetramer per ATP hydrolyzed, thus driving DNA branch migration. The RuvB motors rotate together with the DNA substrate, which together with the progressing nucleotide cycle form the mechanistic basis for DNA recombination by continuous HJ branch migration. Branch migration allows RuvC to scan DNA until it finds its consensus sequence, where it cleaves and resolves cruciform DNA. This Mycolicibacterium smegmatis (strain ATCC 700084 / mc(2)155) (Mycobacterium smegmatis) protein is Holliday junction branch migration complex subunit RuvB.